A 76-amino-acid polypeptide reads, in one-letter code: MPSVRSVTCCCLLWMMLSVQLVTPGSPATAQLSGQRTARGPGSAICNMACRLGQGHMYPFCNCNGKRDVVSSSMAV.

The N-terminal stretch at 1–27 (MPSVRSVTCCCLLWMMLSVQLVTPGSP) is a signal peptide. The propeptide occupies 28–39 (ATAQLSGQRTAR). Disulfide bonds link Cys-46/Cys-61 and Cys-50/Cys-63. The residue at position 64 (Asn-64) is an Asparagine amide. The propeptide occupies 65–76 (GKRDVVSSSMAV).

This sequence belongs to the conotoxin J superfamily. As to expression, expressed by the venom duct.

The protein localises to the secreted. Highly inhibits both nicotinic acetylcholine receptors (neuronal (alpha-3/beta-4) and muscular (alpha-1/beta-1/epsilon/delta) subtypes) and the voltage-gated potassium channel Kv1.6/KCNA6 subtype. This is Alpha/kappa-conotoxin-like pl14.1 from Conus planorbis (Planorbis cone).